The chain runs to 170 residues: Protein ripply3 (170 aa).

Positions 40-43 (WRPW) match the WRPW motif motif. Residues 79–114 (HPVRLYMPKSKTSEYLQHMGKKVLANFPVQATIHFY) form a ripply homology domain region. Over residues 143 to 152 (VNSSRGSGDN) the composition is skewed to polar residues. The interval 143 to 170 (VNSSRGSGDNYSVPGGPKRNISSHTGSA) is disordered.

Belongs to the ripply family. As to quaternary structure, interacts with tbx1 and tle4/grg4.

The protein localises to the nucleus. Acts as a transcriptional corepressor. Negative regulator of the transcriptional activity of tbx1 that plays a key role in pharyngeal development. Plays a role in the formation of the anteroposterior (AP) axis during embryonic development; required to establish the posterolateral border of the pre-placodal ectoderm (PPE) acting downstream of the retinoic acid receptor (RAR) signaling. The sequence is that of Protein ripply3 from Xenopus tropicalis (Western clawed frog).